A 461-amino-acid polypeptide reads, in one-letter code: Tumor necrosis factor receptor superfamily member 1A (461 aa).

Residues 1-29 (MGLSTVPGLLLPLVLRALLVDVYPAGVHG) form the signal peptide. Residues 30–210 (LVLHPGDREK…RNDFQDTGTT (181 aa)) lie on the Extracellular side of the membrane. 4 TNFR-Cys repeats span residues 43–82 (LCPQGKYSHPQNRSICCTKCHKGTYLHNDCLGPGLDTDCR), 83–125 (ECDN…DTVC), 126–166 (GCRK…DTIC), and 167–195 (NCHSGFFLRDKECVSCVNCKNADCKNLCP). 7 cysteine pairs are disulfide-bonded: cysteine 44–cysteine 58, cysteine 59–cysteine 72, cysteine 62–cysteine 81, cysteine 84–cysteine 99, cysteine 102–cysteine 117, cysteine 105–cysteine 125, and cysteine 127–cysteine 143. Asparagine 54 carries N-linked (GlcNAc...) asparagine glycosylation. Asparagine 86 carries N-linked (GlcNAc...) asparagine glycosylation. 2 N-linked (GlcNAc...) asparagine glycosylation sites follow: asparagine 145 and asparagine 151. 5 disulfides stabilise this stretch: cysteine 146/cysteine 158, cysteine 149/cysteine 166, cysteine 168/cysteine 179, cysteine 182/cysteine 194, and cysteine 185/cysteine 190. The helical transmembrane segment at 211-233 (VLLPLVIFFGLCLAFFLFVGLAC) threads the bilayer. Residues 234-461 (RYQRWKPKLY…RLAPAPHLLR (228 aa)) lie on the Cytoplasmic side of the membrane. An N-SMase activation domain (NSD) region spans residues 340–350 (LPKWGGSAHSA). The region spanning 362-447 (PATLYAVVDG…GCLEDIEEAL (86 aa)) is the Death domain.

As to quaternary structure, binding of TNF to the extracellular domain leads to homotrimerization. The aggregated death domains provide a novel molecular interface that interacts specifically with the death domain of TRADD. Various TRADD-interacting proteins such as TRAFS, RIPK1 and possibly FADD, are recruited to the complex by their association with TRADD. This complex activates at least two distinct signaling cascades, apoptosis and NF-kappa-B signaling. Interacts with BAG4, BABAM2, FEM1B, GRB2, SQSTM1 and TRPC4AP. Interacts with DAB2IP. Interacts directly with NOL3 (via CARD domain); inhibits TNF-signaling pathway. Interacts with SH3RF2, TRADD and RIPK1. SH3RF2 facilitates the recruitment of RIPK1 and TRADD to TNFRSF1A in a TNF-alpha-dependent process. Interacts with PGLYRP1; this interaction is important for cell death induction. Interacts (via death domain) with MADD (via death domain).

Its subcellular location is the cell membrane. It localises to the golgi apparatus membrane. Its function is as follows. Receptor for TNFSF2/TNF-alpha and homotrimeric TNFSF1/lymphotoxin-alpha. The adapter molecule FADD recruits caspase-8 to the activated receptor. The resulting death-inducing signaling complex (DISC) performs caspase-8 proteolytic activation which initiates the subsequent cascade of caspases (aspartate-specific cysteine proteases) mediating apoptosis. In Sus scrofa (Pig), this protein is Tumor necrosis factor receptor superfamily member 1A (TNFRSF1A).